Reading from the N-terminus, the 249-residue chain is ATP synthase subunit a (249 aa).

Helical transmembrane passes span 30-50, 84-104, 113-133, 143-163, 196-216, and 221-241; these read SAYM…GSAG, FFPL…VGII, HIIV…IYGF, IFVP…IEVF, LLAG…GMVV, and LELL…CIYL.

This sequence belongs to the ATPase A chain family. In terms of assembly, F-type ATPases have 2 components, CF(1) - the catalytic core - and CF(0) - the membrane proton channel. CF(1) has five subunits: alpha(3), beta(3), gamma(1), delta(1), epsilon(1). CF(0) has four main subunits: a, b, b' and c.

The protein localises to the cell inner membrane. Key component of the proton channel; it plays a direct role in the translocation of protons across the membrane. The polypeptide is ATP synthase subunit a (Rhodopseudomonas palustris (strain BisA53)).